A 1545-amino-acid polypeptide reads, in one-letter code: Tricalbin-3 (1545 aa).

The segment at 1–89 is disordered; the sequence is MTGIKAQVHP…SNPEGKKQSS (89 aa). Over 1–206 the chain is Cytoplasmic; it reads MTGIKAQVHP…AYILENFYND (206 aa). Residues 62–80 are compositionally biased toward polar residues; that stretch reads TKTSNSVSDVSKGQKTADS. Residues Ser-67 and Ser-112 each carry the phosphoserine modification. A helical membrane pass occupies residues 207–227; the sequence is WYCNIATVLGTCFFSWLFAYI. Position 228 (Gly-228) is a topological domain, extracellular. Residues 229–249 traverse the membrane as a helical segment; it reads FSWWSMIFIFLGTATVYNAEY. The Cytoplasmic portion of the chain corresponds to 250–1545; sequence TRFNRNIRDD…VPEVPQEYTQ (1296 aa). Residues 272 to 479 form the SMP-LTD domain; sequence RVESTTWLNS…PPNHLDINVE (208 aa). Residues 470-596 enclose the C2 1 domain; that stretch reads PPNHLDINVE…LQNPVLDNQT (127 aa). Residues 620 to 660 adopt a coiled-coil conformation; it reads EDKSEEKAVERAEAKAKGKKEDENEDTTEKEEDENEESSQT. The segment covering 624 to 641 has biased composition (basic and acidic residues); it reads EEKAVERAEAKAKGKKED. Positions 624–660 are disordered; that stretch reads EEKAVERAEAKAKGKKEDENEDTTEKEEDENEESSQT. The span at 642 to 658 shows a compositional bias: acidic residues; that stretch reads ENEDTTEKEEDENEESS. C2 domains are found at residues 646–763 and 783–897; these read TTEK…AQEF and MTGA…SGKY. Positions 937-972 form a coiled coil; that stretch reads SPEELVNVEKLEKELKEKKKKFEATQEENEQEMEKN. One can recognise a C2 4 domain in the interval 1119-1234; it reads PTSVKLPSSE…EVGKTYNWNL (116 aa). Ca(2+) is bound by residues Asp-1150, Asp-1156, Asp-1204, Asp-1206, and Asp-1212. A disordered region spans residues 1304–1404; that stretch reads LLKSLGGNPM…NSRGHSRASS (101 aa). Residues 1318 to 1328 are compositionally biased toward polar residues; the sequence is SSNGNESNGAK. Residues 1329 to 1340 are compositionally biased toward basic and acidic residues; that stretch reads KSSEKKSFDRRS. A phosphoserine mark is found at Ser-1340, Ser-1342, and Ser-1346. The span at 1341–1351 shows a compositional bias: polar residues; the sequence is PSNLNSTSVTP. Thr-1350 bears the Phosphothreonine mark. Ser-1354 bears the Phosphoserine mark. Residues 1361-1373 show a composition bias toward polar residues; that stretch reads VPNTSYAPVQSAS. The span at 1377 to 1404 shows a compositional bias: low complexity; the sequence is KPTDNTSSSSNKKDTPSSNSRGHSRASS. In terms of domain architecture, C2 5 spans 1396 to 1514; the sequence is SRGHSRASSF…QQDGQISVKL (119 aa). Ser-1400 bears the Phosphoserine mark.

This sequence belongs to the tricalbin family. Interacts with TCB2 via its C-terminal domain. Requires Ca(2+) as cofactor.

Its subcellular location is the cell membrane. It localises to the endoplasmic reticulum membrane. May play a role in membrane trafficking. The sequence is that of Tricalbin-3 (TCB3) from Saccharomyces cerevisiae (strain ATCC 204508 / S288c) (Baker's yeast).